A 331-amino-acid chain; its full sequence is Pectinesterase (331 aa).

The signal sequence occupies residues 1-17 (MVKSILASVLFAATALA). Gln138 is a substrate binding site. Asp161 acts as the Proton donor in catalysis. Asp182 serves as the catalytic Nucleophile. Arg247 and Trp249 together coordinate substrate.

It belongs to the pectinesterase family.

It localises to the secreted. The enzyme catalyses [(1-&gt;4)-alpha-D-galacturonosyl methyl ester](n) + n H2O = [(1-&gt;4)-alpha-D-galacturonosyl](n) + n methanol + n H(+). It participates in glycan metabolism; pectin degradation; 2-dehydro-3-deoxy-D-gluconate from pectin: step 1/5. Involved in maceration and soft-rotting of plant tissue. The protein is Pectinesterase (pme1) of Aspergillus niger.